Consider the following 128-residue polypeptide: Con-Ins F1 (128 aa).

The first 24 residues, 1 to 24 (MTTSSYFLLVTLGLLLYVCRSSFG), serve as a signal peptide directing secretion. Cystine bridges form between Cys29/Cys104, Cys41/Cys107, Cys53/Cys120, and Cys106/Cys111. Residues 59-89 (LQGGTGKKRGRASPLRKRRAFLSMLKARAKR) constitute a propeptide, c peptide. Glu115 is subject to 4-carboxyglutamate; partial. Residue Ser127 is modified to Serine amide.

This sequence belongs to the insulin family. As to quaternary structure, heterodimer of A and B chains; disulfide-linked. In terms of tissue distribution, expressed by the venom gland.

The protein localises to the secreted. Its function is as follows. This venom insulin facilitates prey capture by rapidly inducing hypoglycemic shock. Intraperitoneal injection of this peptide into zebrafish lowers blood glucose with the same potency than human insulin. In vivo, when applied to water, this peptide reduces overall locomotor activity of zebrafish larvae, observed as a significant decrease in the percentage of time spent swimming and movement frequency. The sequence is that of Con-Ins F1 from Conus floridulus (Cone snail).